Consider the following 115-residue polypeptide: Small polypeptide DEVIL 13 (115 aa).

Positions 1 to 12 (MEEKWKLSKKDT) are enriched in basic and acidic residues. The tract at residues 1–89 (MEEKWKLSKK…SITQKYSSLA (89 aa)) is disordered. Residues 13-65 (TASSSSSKSKFSRSFSTSASSTKSPIFVRSSSTKCSVPSSSSSSSSSSSISRS) show a composition bias toward low complexity. Residues 44–63 (STKCSVPSSSSSSSSSSSIS) form a helical membrane-spanning segment. Residues 80-111 (SITQKYSSLAKEQKARFYIMRRCVAMLVCWHK) are required for DVL/RTFL small polypeptide activity.

This sequence belongs to the DVL/RTFL small polypeptides family.

It is found in the cell membrane. Functionally, small polypeptide acting as a regulatory molecule which coordinates cellular responses required for differentiation, growth and development, probably by restricting polar cell proliferation in lateral organs and coordinating socket cell recruitment and differentiation at trichome sites. In Arabidopsis thaliana (Mouse-ear cress), this protein is Small polypeptide DEVIL 13.